Here is a 259-residue protein sequence, read N- to C-terminus: Protein IQ-DOMAIN 10 (259 aa).

The segment at 18–39 (KNKSNRGNVHSETSNRVKPVES) is disordered. Residues 50 to 77 (EVAVIRIQKAFRAFKARKRLCSLKSARR) form the IQ domain. Residues 61–71 (RAFKARKRLCS) are calmodulin-binding. A disordered region spans residues 226 to 259 (KPSKKPEKSSPNNVITKTSAKPDEVGNSKKPGSG).

Belongs to the IQD family. As to quaternary structure, binds to multiple calmodulin (CaM) in the presence of Ca(2+) and CaM-like proteins.

It is found in the nucleus. The protein localises to the cytoplasm. The protein resides in the cytoskeleton. May be involved in cooperative interactions with calmodulins or calmodulin-like proteins. Recruits calmodulin proteins to microtubules, thus being a potential scaffold in cellular signaling and trafficking. May associate with nucleic acids and regulate gene expression at the transcriptional or post-transcriptional level. This Arabidopsis thaliana (Mouse-ear cress) protein is Protein IQ-DOMAIN 10.